Consider the following 242-residue polypeptide: Uridylate kinase (242 aa).

11 to 14 contributes to the ATP binding site; that stretch reads KLSG. The involved in allosteric activation by GTP stretch occupies residues 19 to 24; that stretch reads GDKGVG. Residue G53 participates in UMP binding. Residues G54 and R58 each coordinate ATP. UMP is bound by residues D73 and 134–141; that span reads IGSPYFST. ATP contacts are provided by N162, Y168, and D171.

It belongs to the UMP kinase family. Homohexamer.

It localises to the cytoplasm. It catalyses the reaction UMP + ATP = UDP + ADP. Its pathway is pyrimidine metabolism; CTP biosynthesis via de novo pathway; UDP from UMP (UMPK route): step 1/1. With respect to regulation, allosterically activated by GTP. Inhibited by UTP. In terms of biological role, catalyzes the reversible phosphorylation of UMP to UDP. The chain is Uridylate kinase from Streptococcus agalactiae serotype Ia (strain ATCC 27591 / A909 / CDC SS700).